Here is a 317-residue protein sequence, read N- to C-terminus: 4-hydroxy-3-methylbut-2-enyl diphosphate reductase (317 aa).

Cys-12 provides a ligand contact to [4Fe-4S] cluster. (2E)-4-hydroxy-3-methylbut-2-enyl diphosphate is bound by residues His-41 and His-74. Residues His-41 and His-74 each contribute to the dimethylallyl diphosphate site. Residues His-41 and His-74 each contribute to the isopentenyl diphosphate site. Cys-96 contributes to the [4Fe-4S] cluster binding site. His-124 contributes to the (2E)-4-hydroxy-3-methylbut-2-enyl diphosphate binding site. Residue His-124 participates in dimethylallyl diphosphate binding. Residue His-124 coordinates isopentenyl diphosphate. The active-site Proton donor is the Glu-126. A (2E)-4-hydroxy-3-methylbut-2-enyl diphosphate-binding site is contributed by Thr-168. [4Fe-4S] cluster is bound at residue Cys-198. (2E)-4-hydroxy-3-methylbut-2-enyl diphosphate contacts are provided by Ser-226, Ser-227, Asn-228, and Ser-270. 4 residues coordinate dimethylallyl diphosphate: Ser-226, Ser-227, Asn-228, and Ser-270. The isopentenyl diphosphate site is built by Ser-226, Ser-227, Asn-228, and Ser-270.

The protein belongs to the IspH family. [4Fe-4S] cluster is required as a cofactor.

The enzyme catalyses isopentenyl diphosphate + 2 oxidized [2Fe-2S]-[ferredoxin] + H2O = (2E)-4-hydroxy-3-methylbut-2-enyl diphosphate + 2 reduced [2Fe-2S]-[ferredoxin] + 2 H(+). The catalysed reaction is dimethylallyl diphosphate + 2 oxidized [2Fe-2S]-[ferredoxin] + H2O = (2E)-4-hydroxy-3-methylbut-2-enyl diphosphate + 2 reduced [2Fe-2S]-[ferredoxin] + 2 H(+). It participates in isoprenoid biosynthesis; dimethylallyl diphosphate biosynthesis; dimethylallyl diphosphate from (2E)-4-hydroxy-3-methylbutenyl diphosphate: step 1/1. It functions in the pathway isoprenoid biosynthesis; isopentenyl diphosphate biosynthesis via DXP pathway; isopentenyl diphosphate from 1-deoxy-D-xylulose 5-phosphate: step 6/6. Catalyzes the conversion of 1-hydroxy-2-methyl-2-(E)-butenyl 4-diphosphate (HMBPP) into a mixture of isopentenyl diphosphate (IPP) and dimethylallyl diphosphate (DMAPP). Acts in the terminal step of the DOXP/MEP pathway for isoprenoid precursor biosynthesis. In Chromohalobacter salexigens (strain ATCC BAA-138 / DSM 3043 / CIP 106854 / NCIMB 13768 / 1H11), this protein is 4-hydroxy-3-methylbut-2-enyl diphosphate reductase.